The following is an 812-amino-acid chain: Toll-like receptor 10 (812 aa).

The N-terminal stretch at 1–19 (MRYIRSIYIFCSIVTSVRS) is a signal peptide. The Extracellular segment spans residues 20 to 577 (GASELPEERE…VHLPEISCNT (558 aa)). LRR repeat units follow at residues 24–46 (LPEERELTTNFSSMSLTKVPEGL), 49–70 (ITTTLDLSYNLLFQLQHSDFRS), 73–94 (KLKVLILCHNRIQELDIKTFEF), 97–118 (ELSYLDVSNNRLKSVTWFSLAG), and 119–139 (LRHLDLSFNDFDTLPISVETG). The N-linked (GlcNAc...) asparagine glycan is linked to N33. N140 is a glycosylation site (N-linked (GlcNAc...) asparagine). Residues 143–166 (HLETLGLSGAKIQKSDFQKIAHLQ) form an LRR 6 repeat. N189 carries an N-linked (GlcNAc...) asparagine glycan. LRR repeat units follow at residues 296–321 (SNTVMRTIKLEHVHFRIFNIPQESIY), 325–348 (TKMDIENLTISDAQMPHMLFPMYP), 350–373 (RFQYLNFANNILTDDVFKKSIQLP), and 374–395 (HLKTLILKDNKLETLSLVSHFA). N331 is a glycosylation site (N-linked (GlcNAc...) asparagine). N397 carries an N-linked (GlcNAc...) asparagine glycan. 5 LRR repeats span residues 399 to 420 (SLRHLDLSENLLQHENDENCLW), 423 to 443 (TLVTMNLSFNKFADSVFGCLP), 445 to 467 (NIQILDLNSNKIQTVPKAITHLT), 468 to 489 (SLRELNLAFNFLTDLPGCSHFR), and 490 to 510 (RLLVLNVEMNLILSSSLDFFQ). An N-linked (GlcNAc...) asparagine glycan is attached at N428. The 55-residue stretch at 523–577 (NPFRCTCELRDFIQLGKYSEGMMVGWSDSYICEYPLNLKGTQLKDVHLPEISCNT) folds into the LRRCT domain. The helical transmembrane segment at 578-598 (GLLIVTIVVVMLVLGMAVAFC) threads the bilayer. Over 599–812 (CLHFDLPWYL…AISLIRTDCL (214 aa)) the chain is Cytoplasmic. In terms of domain architecture, TIR spans 633–776 (VQFHVFISYS…LFWANLRAAL (144 aa)).

It belongs to the Toll-like receptor family. Binds MYD88 via their respective TIR domains.

It is found in the membrane. Functionally, participates in the innate immune response to microbial agents. Acts via MYD88 and TRAF6, leading to NF-kappa-B activation, cytokine secretion and the inflammatory response. This is Toll-like receptor 10 (TLR10) from Bos taurus (Bovine).